Here is a 452-residue protein sequence, read N- to C-terminus: Lipase member H (452 aa).

An N-terminal signal peptide occupies residues 1-16 (MLRFYLFISLLCLVRS). Residues Asn50, Asn66, and Asn122 are each glycosylated (N-linked (GlcNAc...) asparagine). Ser154 functions as the Nucleophile in the catalytic mechanism. The Charge relay system role is filled by Asp178. Cys233 and Cys247 form a disulfide bridge. His249 acts as the Charge relay system in catalysis. Residue Asn263 is glycosylated (N-linked (GlcNAc...) asparagine). Cystine bridges form between Cys271–Cys282, Cys285–Cys293, and Cys428–Cys447.

Belongs to the AB hydrolase superfamily. Lipase family. In terms of assembly, interacts with TTMP/C3orf52. Expressed in liver and lacrimal gland.

The protein resides in the secreted. The protein localises to the cell membrane. The catalysed reaction is 1-hexadecanoyl-2-(9Z-octadecenoyl)-sn-glycero-3-phosphate + H2O = 2-(9Z-octadecenoyl)-sn-glycero-3-phosphate + hexadecanoate + H(+). In terms of biological role, hydrolyzes specifically phosphatidic acid (PA) to produce 2-acyl lysophosphatidic acid (LPA; a potent bioactive lipid mediator) and fatty acid. Does not hydrolyze other phospholipids, like phosphatidylserine (PS), phosphatidylcholine (PC) and phosphatidylethanolamine (PE) or triacylglycerol (TG). The chain is Lipase member H (LIPH) from Oryctolagus cuniculus (Rabbit).